The following is a 98-amino-acid chain: Mu-type opioid receptor (98 aa).

Over 1–9 the chain is Cytoplasmic; it reads YTKMKTATN. Residues 10–34 traverse the membrane as a helical segment; sequence IYIFNLALADALATSTLPFQSVNYL. At 35–45 the chain is on the extracellular side; it reads MGTWPFGTILC. Residues 46-68 form a helical membrane-spanning segment; it reads KIVISIDYYNMFTSIFTLCTMSV. At 69–88 the chain is on the cytoplasmic side; the sequence is DRYIAVCHPVKALDFRTPRN. The residue at position 71 (Tyr-71) is a Phosphotyrosine. A helical transmembrane segment spans residues 89–98; the sequence is AKTVNVCNWI.

This sequence belongs to the G-protein coupled receptor 1 family. Forms homooligomers and heterooligomers with other GPCRs, such as OPRD1, OPRK1, OPRL1, NPFFR2, ADRA2A, SSTR2, CNR1 and CCR5 (probably in dimeric forms). Interacts with heterotrimeric G proteins; interaction with a heterotrimeric complex containing GNAI1, GNB1 and GNG2 stabilizes the active conformation of the receptor and increases its affinity for endomorphin-2, the synthetic opioid peptide DAMGO and for morphinan agonists. Interacts with PPL; the interaction disrupts agonist-mediated G-protein activation. Interacts (via C-terminus) with DNAJB4 (via C-terminus). Interacts with calmodulin; the interaction inhibits the constitutive activity of OPRM1; it abolishes basal and attenuates agonist-stimulated G-protein coupling. Interacts with FLNA, PLD2, RANBP9 and WLS and GPM6A. Interacts with RTP4. Interacts with SYP and GNAS. Interacts with RGS9, RGS17, RGS20, RGS4, PPP1R9B and HINT1. Post-translationally, phosphorylated. Differentially phosphorylated in basal and agonist-induced conditions. Agonist-mediated phosphorylation modulates receptor internalization. Phosphorylated by GRK2 in a agonist-dependent manner. Phosphorylated on tyrosine residues; the phosphorylation is involved in agonist-induced G-protein-independent receptor down-regulation. In terms of processing, phosphorylated. Differentially phosphorylated in basal and agonist-induced conditions. Agonist-mediated phosphorylation modulates receptor internalization. Phosphorylated by GRK2 in a agonist-dependent manner. Phosphorylated on tyrosine residues; the phosphorylation is involved in agonist-induced G-protein-independent receptor down-regulation. Ubiquitinated. A basal ubiquitination seems not to be related to degradation. Ubiquitination is increased upon formation of OPRM1:OPRD1 oligomers leading to proteasomal degradation; the ubiquitination is diminished by RTP4.

Its subcellular location is the cell membrane. The protein localises to the cell projection. The protein resides in the axon. It localises to the perikaryon. It is found in the dendrite. Its subcellular location is the endosome. Receptor for endogenous opioids such as beta-endorphin and endomorphin. Receptor for natural and synthetic opioids including morphine, heroin, DAMGO, fentanyl, etorphine, buprenorphin and methadone. Also activated by enkephalin peptides, such as Met-enkephalin or Met-enkephalin-Arg-Phe, with higher affinity for Met-enkephalin-Arg-Phe. Agonist binding to the receptor induces coupling to an inactive GDP-bound heterotrimeric G-protein complex and subsequent exchange of GDP for GTP in the G-protein alpha subunit leading to dissociation of the G-protein complex with the free GTP-bound G-protein alpha and the G-protein beta-gamma dimer activating downstream cellular effectors. The agonist- and cell type-specific activity is predominantly coupled to pertussis toxin-sensitive G(i) and G(o) G alpha proteins, GNAI1, GNAI2, GNAI3 and GNAO1, and to a lesser extent to pertussis toxin-insensitive G alpha proteins GNAZ and GNA15. They mediate an array of downstream cellular responses, including inhibition of adenylate cyclase activity and both N-type and L-type calcium channels, activation of inward rectifying potassium channels, mitogen-activated protein kinase (MAPK), phospholipase C (PLC), phosphoinositide/protein kinase (PKC), phosphoinositide 3-kinase (PI3K) and regulation of NF-kappa-B. Also couples to adenylate cyclase stimulatory G alpha proteins. The selective temporal coupling to G-proteins and subsequent signaling can be regulated by RGSZ proteins, such as RGS9, RGS17 and RGS4. Phosphorylation by members of the GPRK subfamily of Ser/Thr protein kinases and association with beta-arrestins is involved in short-term receptor desensitization. Beta-arrestins associate with the GPRK-phosphorylated receptor and uncouple it from the G-protein thus terminating signal transduction. The phosphorylated receptor is internalized through endocytosis via clathrin-coated pits which involves beta-arrestins. The activation of the ERK pathway occurs either in a G-protein-dependent or a beta-arrestin-dependent manner and is regulated by agonist-specific receptor phosphorylation. Acts as a class A G-protein coupled receptor (GPCR) which dissociates from beta-arrestin at or near the plasma membrane and undergoes rapid recycling. Receptor down-regulation pathways are varying with the agonist and occur dependent or independent of G-protein coupling. Endogenous ligands induce rapid desensitization, endocytosis and recycling. Heterooligomerization with other GPCRs can modulate agonist binding, signaling and trafficking properties. Involved in neurogenesis. This chain is Mu-type opioid receptor (OPRM1), found in Cavia porcellus (Guinea pig).